A 714-amino-acid chain; its full sequence is Fumarate reductase flavoprotein subunit (714 aa).

Residues 13 to 16, 42 to 44, and 49 to 50 each bind FAD; these read GGLA, SHS, and GG. The residue at position 43 (His-43) is a Tele-8alpha-FAD histidine. Active-site residues include His-257 and Arg-273. FAD contacts are provided by residues Glu-420 and 436 to 437; that span reads SV.

Belongs to the FAD-dependent oxidoreductase 2 family. FRD/SDH subfamily. In terms of assembly, part of an enzyme complex containing three subunits: a flavoprotein (frdA), an iron-sulfur protein (frdB), and diheme cytochrome b (frdC). The cofactor is FAD.

The protein resides in the cell inner membrane. The enzyme catalyses a quinone + succinate = fumarate + a quinol. The fumarate reductase enzyme complex is required for fumarate respiration. The chain is Fumarate reductase flavoprotein subunit (frdA) from Helicobacter pylori (strain ATCC 700392 / 26695) (Campylobacter pylori).